We begin with the raw amino-acid sequence, 329 residues long: Eukaryotic translation initiation factor 2 subunit 1 (329 aa).

An S1 motif domain is found at 24–95; sequence DDLIMVKVNR…QKGYIDLSKR (72 aa). Ser-59 carries the post-translational modification Phosphoserine; by eIK1, eIK2 and PK4. Residues 291 to 329 form a disordered region; sequence LDKHDGISSDDDDYNTSDEDDENSSEEDENTSEDEEEED. A compositionally biased stretch (acidic residues) spans 298-329; that stretch reads SSDDDDYNTSDEDDENSSEEDENTSEDEEEED.

Belongs to the eIF-2-alpha family. In terms of processing, phosphorylated at Ser-59 by eIK1 in response to amino acid starvation. Phosphorylates at Ser-59 in schizonts and gametocytes but not in rings and young trophozoites. Phosphorylates at Ser-59 by eIK2 in salivary gland sporozoites but not in midgut and hemocoel sporozoites. Dephosphorylated at Ser-59 by UIS2. Phosphorylation of eIF2alpha subunit of the pre-initiation complex eIF2 inhibits recycling of inactive eIF2-GDP to active eIF2-GTP by limiting the activity of the guanine nucleotide exchange factor eIF2B and thus, inhibits protein translation.

The protein localises to the cytoplasm. The protein resides in the stress granule. In terms of biological role, functions in the early steps of protein synthesis by forming a ternary complex with GTP and initiator tRNA. May regulate protein translation in response to amino acid starvation. May regulate protein at various stages of parasite development. The protein is Eukaryotic translation initiation factor 2 subunit 1 of Plasmodium falciparum (isolate 3D7).